We begin with the raw amino-acid sequence, 241 residues long: Ribosomal RNA small subunit methyltransferase J (241 aa).

Residues 94-95 and Asp163 contribute to the S-adenosyl-L-methionine site; that span reads RD.

Belongs to the methyltransferase superfamily. RsmJ family.

The protein localises to the cytoplasm. The catalysed reaction is guanosine(1516) in 16S rRNA + S-adenosyl-L-methionine = N(2)-methylguanosine(1516) in 16S rRNA + S-adenosyl-L-homocysteine + H(+). In terms of biological role, specifically methylates the guanosine in position 1516 of 16S rRNA. The sequence is that of Ribosomal RNA small subunit methyltransferase J from Francisella tularensis subsp. novicida (strain U112).